Consider the following 698-residue polypeptide: MKEVGEVEEVRCLDPQLWHACAGGMVQMPAPRSRVYYFAQGHAEHADGGGGAAAAAAELGPRALPPLVLCRVEGVQFLADRDSDEVYAKIRLAPVAPGEAEFREPDELCPLGAAGDAAEPSPEKPTSFAKTLTQSDANNGGGFSVPRYCAETIFPKLDYRADPPVQTVLAKDVHGVVWKFRHIYRGTPRRHLLTTGWSTFVNQKKLVAGDSIVFLRTRHGELCVGIRRAKRMACGGMECMSGWNAPGYGGGGFSAFLKEEESKLMKGHGGGGYMKGKGKVRMADVVEAASLASSGQPFEVAYYPRASTPDFVVKAASVQAAMRIQWCSGMRFKMAFETEDSSRISWFMGTISSVQVADPNRWPNSPWRLLQVTWDEPDLLQNVKCVSPWLVELVSSIPPIHLGPFSSPRKKLRVPPHPDFPFEGHLLNPIFHGNPLGPSNSPLCCYPDTAPAGIQGARHAQFGLPLTDHQLNKLHLGLLHSGSFNRLDAITPPSRISKGFVVSSAPAHDNISCLLSISTPQVAEKSDDRKTTPHIMLFGKAIFTEQQITSSGSTETLSPGVTGNSSPNGNAHKTGNASDGSGSSICIGFSSQGHEASDLGLEAGHCKVFMESEDVGRTIDLSVFGSYEELYGRLADMFGIEKEEIINHLHFRDAAGVVKHPGEVPFSDFMKAARRLTIIAGDRERIERPLIECLVEQA.

Residues 128-230 (FAKTLTQSDA…ELCVGIRRAK (103 aa)) constitute a DNA-binding region (TF-B3). The span at 549 to 577 (TSSGSTETLSPGVTGNSSPNGNAHKTGNA) shows a compositional bias: polar residues. The interval 549–579 (TSSGSTETLSPGVTGNSSPNGNAHKTGNASD) is disordered. Residues 603–683 (AGHCKVFMES…RRLTIIAGDR (81 aa)) form the PB1 domain.

The protein belongs to the ARF family. In terms of assembly, homodimers and heterodimers. As to expression, expressed in roots, culms, leaves and young panicles.

Its subcellular location is the nucleus. In terms of biological role, auxin response factors (ARFs) are transcriptional factors that bind specifically to the DNA sequence 5'-TGTCTC-3' found in the auxin-responsive promoter elements (AuxREs). The polypeptide is Auxin response factor 22 (ARF22) (Oryza sativa subsp. japonica (Rice)).